A 676-amino-acid chain; its full sequence is Electrogenic aspartate/glutamate antiporter SLC25A13, mitochondrial (676 aa).

A2 is modified (N-acetylalanine). Positions 2–295 (AAAKVALTKR…TLADIERIAP (294 aa)) are regulatory N-terminal domain. Residues 2–332 (AAAKVALTKR…LLQLAESAYR (331 aa)) lie on the Mitochondrial intermembrane side of the membrane. EF-hand domains follow at residues 51–86 (SQPN…SVLC), 87–122 (APDA…TTIH), 125–157 (IPFN…FLLE), and 158–193 (IQLE…IRPH). 5 residues coordinate Ca(2+): D66, T68, D70, L72, and E77. Residues 296-312 (LEEGMLPFNLAEAQRQQ) are linker loop domain. Residues 322-613 (FLLQLAESAY…LQRWFYVDFG (292 aa)) are carrier domain. Solcar repeat units follow at residues 327-419 (AESA…VRDK), 427-511 (VPLL…VKAS), and 519-607 (VSPG…LQRW). The chain crosses the membrane as a helical span at residues 333–350 (FGLGSIAGAVGATAVYPI). Topologically, residues 351–393 (DLVKTRMQNQRSTGSFVGELMYKNSFDCFKKVLRYEGFFGLYR) are mitochondrial matrix. Residues K354 and K373 each carry the N6-acetyllysine modification. A helical membrane pass occupies residues 394–413 (GLLPQLLGVAPEKAIKLTVN). Over 414–436 (DFVRDKFMHKDGSVPLLAEIFAG) the chain is Mitochondrial intermembrane. A helical transmembrane segment spans residues 437-450 (GCAGGSQVIFTNPL). Over 451–485 (EIVKIRLQVAGEITTGPRVSALSVVRDLGFFGIYK) the chain is Mitochondrial matrix. Residue K454 is modified to N6-methyllysine. At K485 the chain carries N6-acetyllysine; alternate. K485 is modified (N6-succinyllysine; alternate). A helical transmembrane segment spans residues 486–505 (GAKACFLRDIPFSAIYFPCY). Residues 506–524 (AHVKASFANEDGQVSPGSL) lie on the Mitochondrial intermembrane side of the membrane. A helical transmembrane segment spans residues 525-542 (LLAGAIAGMPAASLVTPA). Residues 543–581 (DVIKTRLQVAARAGQTTYSGVTDCFRKILREEGPKALWK) lie on the Mitochondrial matrix side of the membrane. Position 581 is an N6-succinyllysine (K581). The chain crosses the membrane as a helical span at residues 582–601 (GAGARVFRSSPQFGVTLLTY). At 602 to 676 (ELLQRWFYVD…STSKVTAVGS (75 aa)) the chain is on the mitochondrial intermembrane side. The C-terminal domain stretch occupies residues 614–676 (GVKPVGSELV…STSKVTAVGS (63 aa)). An N6-acetyllysine modification is found at K663. Position 667 is a phosphoserine (S667).

This sequence belongs to the mitochondrial carrier (TC 2.A.29) family. As to quaternary structure, homodimer (via N-terminus).

It localises to the mitochondrion inner membrane. It carries out the reaction L-aspartate(in) + L-glutamate(out) + H(+)(out) = L-aspartate(out) + L-glutamate(in) + H(+)(in). The catalysed reaction is 3-sulfino-L-alanine(out) + L-glutamate(in) + H(+)(in) = 3-sulfino-L-alanine(in) + L-glutamate(out) + H(+)(out). It catalyses the reaction 3-sulfino-L-alanine(out) + L-aspartate(in) = 3-sulfino-L-alanine(in) + L-aspartate(out). L-aspartate and 3-sulfino-L-alanine uptake are both inhibited by glisoxepide. Functionally, mitochondrial electrogenic aspartate/glutamate antiporter that favors efflux of aspartate and entry of glutamate and proton within the mitochondria as part of the malate-aspartate shuttle. Also mediates the uptake of L-cysteinesulfinate (3-sulfino-L-alanine) by mitochondria in exchange of L-glutamate and proton. Can also exchange L-cysteinesulfinate with aspartate in their anionic form without any proton translocation. Lacks transport activity towards gamma-aminobutyric acid (GABA). The chain is Electrogenic aspartate/glutamate antiporter SLC25A13, mitochondrial from Rattus norvegicus (Rat).